We begin with the raw amino-acid sequence, 332 residues long: Galectin-4 (332 aa).

Galectin domains are found at residues 19-150 (YHNP…INFI) and 203-332 (FNGR…YVQI). Residue 265–271 (WGSEERK) participates in a beta-D-galactoside binding. Residue S267 is modified to Phosphoserine.

As to quaternary structure, monomer.

Its function is as follows. Galectin that binds lactose and a related range of sugars. May be involved in the assembly of adherens junctions. This is Galectin-4 (LGALS4) from Bos taurus (Bovine).